The following is a 286-amino-acid chain: 2,3,4,5-tetrahydropyridine-2,6-dicarboxylate N-succinyltransferase (286 aa).

2 residues coordinate substrate: arginine 111 and aspartate 148.

Belongs to the transferase hexapeptide repeat family. As to quaternary structure, homotrimer.

Its subcellular location is the cytoplasm. It carries out the reaction (S)-2,3,4,5-tetrahydrodipicolinate + succinyl-CoA + H2O = (S)-2-succinylamino-6-oxoheptanedioate + CoA. The protein operates within amino-acid biosynthesis; L-lysine biosynthesis via DAP pathway; LL-2,6-diaminopimelate from (S)-tetrahydrodipicolinate (succinylase route): step 1/3. The chain is 2,3,4,5-tetrahydropyridine-2,6-dicarboxylate N-succinyltransferase from Rhizobium etli (strain ATCC 51251 / DSM 11541 / JCM 21823 / NBRC 15573 / CFN 42).